The sequence spans 228 residues: UPF0758 protein H16_A3033 (228 aa).

The 123-residue stretch at 102 to 224 (GFDGPAAVRN…IRSLADCCDR (123 aa)) folds into the MPN domain. Zn(2+)-binding residues include His-173, His-175, and Asp-186. The JAMM motif signature appears at 173-186 (HNHPRGTTAPSQSD).

Belongs to the UPF0758 family.

This Cupriavidus necator (strain ATCC 17699 / DSM 428 / KCTC 22496 / NCIMB 10442 / H16 / Stanier 337) (Ralstonia eutropha) protein is UPF0758 protein H16_A3033.